The sequence spans 602 residues: Glutamate-rich protein 6 (602 aa).

A disordered region spans residues Leu22 to Ser67. A compositionally biased stretch (low complexity) spans Arg25 to Ser36.

Belongs to the ERICH6 family.

The protein resides in the nucleus. This is Glutamate-rich protein 6 (Erich6) from Rattus norvegicus (Rat).